We begin with the raw amino-acid sequence, 248 residues long: PF03932 family protein CutC (248 aa).

Belongs to the CutC family. As to quaternary structure, homodimer.

Its subcellular location is the cytoplasm. This Salmonella enteritidis PT4 (strain P125109) protein is PF03932 family protein CutC.